The following is a 180-amino-acid chain: Large ribosomal subunit protein uL5 (180 aa).

Belongs to the universal ribosomal protein uL5 family. Part of the 50S ribosomal subunit; part of the 5S rRNA/L5/L18/L25 subcomplex. Contacts the 5S rRNA and the P site tRNA. Forms a bridge to the 30S subunit in the 70S ribosome.

This is one of the proteins that bind and probably mediate the attachment of the 5S RNA into the large ribosomal subunit, where it forms part of the central protuberance. In the 70S ribosome it contacts protein S13 of the 30S subunit (bridge B1b), connecting the 2 subunits; this bridge is implicated in subunit movement. Contacts the P site tRNA; the 5S rRNA and some of its associated proteins might help stabilize positioning of ribosome-bound tRNAs. The sequence is that of Large ribosomal subunit protein uL5 from Moorella thermoacetica (strain ATCC 39073 / JCM 9320).